The following is a 600-amino-acid chain: Proline--tRNA ligase (600 aa).

Belongs to the class-II aminoacyl-tRNA synthetase family. ProS type 1 subfamily. In terms of assembly, homodimer.

The protein localises to the cytoplasm. It catalyses the reaction tRNA(Pro) + L-proline + ATP = L-prolyl-tRNA(Pro) + AMP + diphosphate. Functionally, catalyzes the attachment of proline to tRNA(Pro) in a two-step reaction: proline is first activated by ATP to form Pro-AMP and then transferred to the acceptor end of tRNA(Pro). As ProRS can inadvertently accommodate and process non-cognate amino acids such as alanine and cysteine, to avoid such errors it has two additional distinct editing activities against alanine. One activity is designated as 'pretransfer' editing and involves the tRNA(Pro)-independent hydrolysis of activated Ala-AMP. The other activity is designated 'posttransfer' editing and involves deacylation of mischarged Ala-tRNA(Pro). The misacylated Cys-tRNA(Pro) is not edited by ProRS. The protein is Proline--tRNA ligase of Synechococcus elongatus (strain ATCC 33912 / PCC 7942 / FACHB-805) (Anacystis nidulans R2).